Here is a 244-residue protein sequence, read N- to C-terminus: Phosphoadenosine 5'-phosphosulfate reductase (244 aa).

Cysteine 239 acts as the Nucleophile; cysteine thiosulfonate intermediate in catalysis.

The protein belongs to the PAPS reductase family. CysH subfamily.

The protein resides in the cytoplasm. It catalyses the reaction [thioredoxin]-disulfide + sulfite + adenosine 3',5'-bisphosphate + 2 H(+) = [thioredoxin]-dithiol + 3'-phosphoadenylyl sulfate. Its pathway is sulfur metabolism; hydrogen sulfide biosynthesis; sulfite from sulfate: step 3/3. Functionally, catalyzes the formation of sulfite from phosphoadenosine 5'-phosphosulfate (PAPS) using thioredoxin as an electron donor. The chain is Phosphoadenosine 5'-phosphosulfate reductase from Salmonella choleraesuis (strain SC-B67).